The following is an 844-amino-acid chain: DNA mismatch repair protein MutS (844 aa).

610 to 617 is an ATP binding site; it reads GPNMGGKS.

The protein belongs to the DNA mismatch repair MutS family.

Its function is as follows. This protein is involved in the repair of mismatches in DNA. It is possible that it carries out the mismatch recognition step. This protein has a weak ATPase activity. This Francisella tularensis subsp. tularensis (strain WY96-3418) protein is DNA mismatch repair protein MutS.